The primary structure comprises 71 residues: U-scoloptoxin(21)-Sm1a (71 aa).

The N-terminal stretch at 1–21 (MKSVIFALFLVYLLIVRAAEA) is a signal peptide. The tract at residues 45 to 71 (IELANDPNGPGRRRRAPAENEDFLKHS) is disordered. Positions 60-71 (APAENEDFLKHS) are enriched in basic and acidic residues.

The protein belongs to the scoloptoxin-21 family. In terms of tissue distribution, expressed by the venom gland.

It is found in the secreted. This is U-scoloptoxin(21)-Sm1a from Scolopendra morsitans (Tanzanian blue ringleg centipede).